The chain runs to 419 residues: D(4) dopamine receptor (419 aa).

Over 1–29 the chain is Extracellular; that stretch reads MGNRSTADADGLLAGRGPAAGASAGASAG. Asn3 carries an N-linked (GlcNAc...) asparagine glycan. A helical membrane pass occupies residues 30–50; the sequence is LAGQGAAALVGGVLLIGAVLA. Residues 51–71 lie on the Cytoplasmic side of the membrane; that stretch reads GNSLVCVSVATERALQTPTNS. Residues 72 to 92 form a helical membrane-spanning segment; the sequence is FIVSLAAADLLLALLVLPLFV. Asp80 is a Na(+) binding site. Topologically, residues 93–110 are extracellular; sequence YSEVQGGAWLLSPRLCDA. The cysteines at positions 108 and 185 are disulfide-linked. The helical transmembrane segment at 111–131 threads the bilayer; it reads LMAMDVMLCTASIFNLCAISV. (2R,3R)-nemonapride is bound at residue Asp115. Ser122 is a binding site for Na(+). Topologically, residues 132–152 are cytoplasmic; the sequence is DRFVAVAVPLRYNRQGGSRRQ. A helical membrane pass occupies residues 153–173; the sequence is LLLIGATWLLSAAVAAPVLCG. The Extracellular segment spans residues 174 to 192; sequence LNDVRGRDPAVCRLEDRDY. Residues 193 to 213 traverse the membrane as a helical segment; it reads VVYSSVCSFFLPCPLMLLLYW. A (2R,3R)-nemonapride-binding site is contributed by Ser196. The Cytoplasmic portion of the chain corresponds to 214-346; sequence ATFRGLQRWE…ITGRERKAMR (133 aa). The segment at 230–264 is disordered; that stretch reads LHGRAPRRPSGPGPPSPTPPAPRLPQDPCGPDCAP. Pro residues predominate over residues 238–254; it reads PSGPGPPSPTPPAPRLP. A 1; approximate repeat occupies 249–264; sequence PAPRLPQDPCGPDCAP. A 4 X 16 AA approximate tandem repeats of [PA]-A-P-G-L-P-[PQR]-[DG]-P-C-G-P-D-C-A-P region spans residues 249-312; the sequence is PAPRLPQDPC…PDPCGSNCAP (64 aa). Tandem repeats lie at residues 265-280 and 281-296. Residues 297 to 312 form a 4; approximate repeat; that stretch reads PAPGLPPDPCGSNCAP. A disordered region spans residues 317 to 336; it reads RAAALPPQTPPQTRRRRRAK. The chain crosses the membrane as a helical span at residues 347 to 367; it reads VLPVVVGAFLLCWTPFFVVHI. The Extracellular segment spans residues 368–382; sequence TQALCPACSVPPRLV. A disulfide bond links Cys372 and Cys375. Residues 383–403 form a helical membrane-spanning segment; sequence SAVTWLGYVNSALNPVIYTVF. The Cytoplasmic portion of the chain corresponds to 404-419; the sequence is NAEFRNVFRKALRACC. Residue Cys419 is the site of S-palmitoyl cysteine attachment.

It belongs to the G-protein coupled receptor 1 family. As to quaternary structure, forms homo- and heterooligomers with DRD2. D4.7 allele exhibits higher affinity for homodimers compared to DRD2 heterodimers, while alleles D42. and 4.4 have similar affinities for both. The interaction with DRD2 may modulate agonist-induced downstream signaling. Interacts with CLIC6. Interacts with GPRASP1. May interact with ADORA2A. Interacts with KLHL12. Polyubiquitinated by the BCR(KLHL12) E3 ubiquitin ligase complex: polyubiquitination does not lead to degradation of DRD4 protein. Post-translationally, palmitoylated. Palmitoylation of the C-terminal Cys is important for normal expression at the cell membrane. Highly expressed in retina. Detected at much lower levels in brain, in amygdala, thalamus, hypothalamus, cerebellum and pituitary.

It localises to the cell membrane. With respect to regulation, signaling in response to agonists such as dopamine, epinephrine and norepinephrine is modulated by Na(+); lower Na(+) levels result in higher receptor activity (in vitro). In terms of biological role, dopamine receptor responsible for neuronal signaling in the mesolimbic system of the brain, an area of the brain that regulates emotion and complex behavior. Activated by dopamine, but also by epinephrine and norepinephrine, and by numerous synthetic agonists and drugs. Agonist binding triggers signaling via G proteins that inhibit adenylyl cyclase. Modulates the circadian rhythm of contrast sensitivity by regulating the rhythmic expression of NPAS2 in the retinal ganglion cells. The sequence is that of D(4) dopamine receptor (DRD4) from Homo sapiens (Human).